Here is a 204-residue protein sequence, read N- to C-terminus: SOSS complex subunit B homolog (204 aa).

The OB DNA-binding region spans Ile24 to Val94. The segment at Arg115 to Arg204 is disordered. 2 stretches are compositionally biased toward low complexity: residues Ala122–Leu131 and Gly139–Thr183. Gly residues predominate over residues Thr187–Gly198.

Belongs to the SOSS-B family.

The protein is SOSS complex subunit B homolog of Drosophila melanogaster (Fruit fly).